We begin with the raw amino-acid sequence, 545 residues long: Chaperonin GroEL (545 aa).

ATP contacts are provided by residues 30–33, Lys-51, 87–91, Gly-415, and Asp-496; these read TLGP and DGTTT.

It belongs to the chaperonin (HSP60) family. As to quaternary structure, forms a cylinder of 14 subunits composed of two heptameric rings stacked back-to-back. Interacts with the co-chaperonin GroES.

It localises to the cytoplasm. It carries out the reaction ATP + H2O + a folded polypeptide = ADP + phosphate + an unfolded polypeptide.. Functionally, together with its co-chaperonin GroES, plays an essential role in assisting protein folding. The GroEL-GroES system forms a nano-cage that allows encapsulation of the non-native substrate proteins and provides a physical environment optimized to promote and accelerate protein folding. In Chlorobaculum tepidum (strain ATCC 49652 / DSM 12025 / NBRC 103806 / TLS) (Chlorobium tepidum), this protein is Chaperonin GroEL.